Consider the following 389-residue polypeptide: MSAVIVNTVEQCGYFNRGQCQSCRHIQVPMAQQLMAKSLELQQLLKPFVAPSAAIFYPPVTGEATAFRNKAKMVVLGAAHAPVLGIVSPSGEAVSLCDCLLYPSDMQKLLHRLTQFVQQAGIPPYRVDKAKGELKFILLTRSQVRGEYLLRFVLRSHNSIERIERALPTLLAEYPQINVVSVNIQPIHMAILEGGEEIFLTENTRLEERFNDVPLFIRPKSFFQTNPQVAAQLYQTAREWVAEFAPKSLWDLFCGVGGFGLHCATKDIALTGIEIEAEAISCAQISANLMGLEKVQFMALDSTDFAQGKNAADKPDLIIVNPPRRGIGEALCQSLSEFAPKAILYSSCNPKTLAKDLEHIQGYHLTKVQLFDLFPHTDHFEVLAMLVKD.

C12, C20, C23, and C99 together coordinate [4Fe-4S] cluster. Positions 224, 253, 274, and 321 each coordinate S-adenosyl-L-methionine. The active-site Nucleophile is C348.

This sequence belongs to the class I-like SAM-binding methyltransferase superfamily. RNA M5U methyltransferase family. RlmC subfamily.

It carries out the reaction uridine(747) in 23S rRNA + S-adenosyl-L-methionine = 5-methyluridine(747) in 23S rRNA + S-adenosyl-L-homocysteine + H(+). In terms of biological role, catalyzes the formation of 5-methyl-uridine at position 747 (m5U747) in 23S rRNA. The protein is 23S rRNA (uracil(747)-C(5))-methyltransferase RlmC of Shewanella putrefaciens (strain CN-32 / ATCC BAA-453).